The primary structure comprises 253 residues: Sporulated oocyst TA4 antigen (253 aa).

The first 23 residues, 1–23, serve as a signal peptide directing secretion; the sequence is MARLSFVSLLSLSLLFGQQAVRA. Positions 182-184 are cleaved as a propeptide — removed in mature form; sequence RRL.

As to quaternary structure, the TA4 antigen is composed of a 17 kDa and a 8 kDa chain, linked by a disulfide bond.

The chain is Sporulated oocyst TA4 antigen from Eimeria tenella (Coccidian parasite).